Consider the following 185-residue polypeptide: MKFNIPIFLTIFRVILIPFFVIAFYLPIESSPFITTLIFFIAGVTDWLDGYLARKWKQTTRFGAFLDPVADKVMVVAALVLIVEHQHTFWITIPAIIMISREIIISALREWMAELGERSKIAVSWWGKWKTTAQMLALGGLLWRYNNYMEIAAIILLYIAAILTIWSMIQYLQVAKGSLLDNIQL.

The next 4 membrane-spanning stretches (helical) occupy residues 7 to 26, 33 to 52, 89 to 108, and 151 to 172; these read IFLTIFRVILIPFFVIAFYL, FITTLIFFIAGVTDWLDGYL, FWITIPAIIMISREIIISAL, and IAAIILLYIAAILTIWSMIQYL.

It belongs to the CDP-alcohol phosphatidyltransferase class-I family.

Its subcellular location is the cell membrane. It catalyses the reaction a CDP-1,2-diacyl-sn-glycerol + sn-glycerol 3-phosphate = a 1,2-diacyl-sn-glycero-3-phospho-(1'-sn-glycero-3'-phosphate) + CMP + H(+). It participates in phospholipid metabolism; phosphatidylglycerol biosynthesis; phosphatidylglycerol from CDP-diacylglycerol: step 1/2. Its function is as follows. This protein catalyzes the committed step to the synthesis of the acidic phospholipids. The polypeptide is CDP-diacylglycerol--glycerol-3-phosphate 3-phosphatidyltransferase (pgsA) (Haemophilus influenzae (strain ATCC 51907 / DSM 11121 / KW20 / Rd)).